Reading from the N-terminus, the 124-residue chain is Large ribosomal subunit protein bL12 (124 aa).

It belongs to the bacterial ribosomal protein bL12 family. As to quaternary structure, homodimer. Part of the ribosomal stalk of the 50S ribosomal subunit. Forms a multimeric L10(L12)X complex, where L10 forms an elongated spine to which 2 to 4 L12 dimers bind in a sequential fashion. Binds GTP-bound translation factors.

Forms part of the ribosomal stalk which helps the ribosome interact with GTP-bound translation factors. Is thus essential for accurate translation. This Chlorobium chlorochromatii (strain CaD3) protein is Large ribosomal subunit protein bL12.